Consider the following 368-residue polypeptide: Homoserine O-acetyltransferase (368 aa).

The region spanning 41 to 352 (NVILITHALS…DYGHDSFLVE (312 aa)) is the AB hydrolase-1 domain. Residue Ser-147 is the Nucleophile of the active site. Position 219 (Arg-219) interacts with substrate. Active-site residues include Asp-313 and His-346. Residue Asp-347 participates in substrate binding.

The protein belongs to the AB hydrolase superfamily. MetX family. Homodimer.

It is found in the cytoplasm. The catalysed reaction is L-homoserine + acetyl-CoA = O-acetyl-L-homoserine + CoA. The protein operates within amino-acid biosynthesis; L-methionine biosynthesis via de novo pathway; O-acetyl-L-homoserine from L-homoserine: step 1/1. Functionally, transfers an acetyl group from acetyl-CoA to L-homoserine, forming acetyl-L-homoserine. The polypeptide is Homoserine O-acetyltransferase (Nautilia profundicola (strain ATCC BAA-1463 / DSM 18972 / AmH)).